We begin with the raw amino-acid sequence, 527 residues long: Peptide chain release factor 3 (527 aa).

A tr-type G domain is found at 9-277 (AKRRTFAIIS…AVVDWAPRPL (269 aa)). GTP-binding positions include 18-25 (SHPDAGKT), 86-90 (DTPGH), and 140-143 (NKLD).

Belongs to the TRAFAC class translation factor GTPase superfamily. Classic translation factor GTPase family. PrfC subfamily.

The protein localises to the cytoplasm. Increases the formation of ribosomal termination complexes and stimulates activities of RF-1 and RF-2. It binds guanine nucleotides and has strong preference for UGA stop codons. It may interact directly with the ribosome. The stimulation of RF-1 and RF-2 is significantly reduced by GTP and GDP, but not by GMP. The chain is Peptide chain release factor 3 from Pseudomonas fluorescens (strain SBW25).